Reading from the N-terminus, the 219-residue chain is Triosephosphate isomerase (219 aa).

6–8 (NYK) contacts substrate. Residue histidine 90 is the Electrophile of the active site. Glutamate 138 (proton acceptor) is an active-site residue. Substrate-binding positions include isoleucine 143, glycine 178, and 199-200 (AS).

This sequence belongs to the triosephosphate isomerase family. Homotetramer; dimer of dimers.

It localises to the cytoplasm. The enzyme catalyses D-glyceraldehyde 3-phosphate = dihydroxyacetone phosphate. It participates in carbohydrate biosynthesis; gluconeogenesis. It functions in the pathway carbohydrate degradation; glycolysis; D-glyceraldehyde 3-phosphate from glycerone phosphate: step 1/1. Its function is as follows. Involved in the gluconeogenesis. Catalyzes stereospecifically the conversion of dihydroxyacetone phosphate (DHAP) to D-glyceraldehyde-3-phosphate (G3P). The chain is Triosephosphate isomerase from Methanocaldococcus jannaschii (strain ATCC 43067 / DSM 2661 / JAL-1 / JCM 10045 / NBRC 100440) (Methanococcus jannaschii).